The primary structure comprises 123 residues: Large ribosomal subunit protein bL12 (123 aa).

Belongs to the bacterial ribosomal protein bL12 family. In terms of assembly, homodimer. Part of the ribosomal stalk of the 50S ribosomal subunit. Forms a multimeric L10(L12)X complex, where L10 forms an elongated spine to which 2 to 4 L12 dimers bind in a sequential fashion. Binds GTP-bound translation factors.

Forms part of the ribosomal stalk which helps the ribosome interact with GTP-bound translation factors. Is thus essential for accurate translation. The chain is Large ribosomal subunit protein bL12 from Borrelia duttonii (strain Ly).